Reading from the N-terminus, the 156-residue chain is Flagellar assembly factor FliW (156 aa).

The protein belongs to the FliW family. As to quaternary structure, interacts with translational regulator CsrA and flagellin(s).

The protein resides in the cytoplasm. Functionally, acts as an anti-CsrA protein, binds CsrA and prevents it from repressing translation of its target genes, one of which is flagellin. Binds to flagellin and participates in the assembly of the flagellum. The sequence is that of Flagellar assembly factor FliW from Syntrophomonas wolfei subsp. wolfei (strain DSM 2245B / Goettingen).